Here is a 453-residue protein sequence, read N- to C-terminus: UDP-N-acetylmuramoylalanine--D-glutamate ligase (453 aa).

117 to 123 (GSNGKST) contributes to the ATP binding site.

The protein belongs to the MurCDEF family.

The protein localises to the cytoplasm. It carries out the reaction UDP-N-acetyl-alpha-D-muramoyl-L-alanine + D-glutamate + ATP = UDP-N-acetyl-alpha-D-muramoyl-L-alanyl-D-glutamate + ADP + phosphate + H(+). It participates in cell wall biogenesis; peptidoglycan biosynthesis. Cell wall formation. Catalyzes the addition of glutamate to the nucleotide precursor UDP-N-acetylmuramoyl-L-alanine (UMA). The chain is UDP-N-acetylmuramoylalanine--D-glutamate ligase from Chromobacterium violaceum (strain ATCC 12472 / DSM 30191 / JCM 1249 / CCUG 213 / NBRC 12614 / NCIMB 9131 / NCTC 9757 / MK).